Consider the following 381-residue polypeptide: NAD-dependent methanol dehydrogenase (381 aa).

Belongs to the iron-containing alcohol dehydrogenase family. Homodecamer. Mg(2+) serves as cofactor. Requires Zn(2+) as cofactor.

The protein resides in the cytoplasm. It catalyses the reaction methanol + NAD(+) = formaldehyde + NADH + H(+). It participates in one-carbon metabolism; methanol degradation; formaldehyde from methanol: step 1/1. With respect to regulation, stimulated by the activator protein Act which requires the presence of magnesium ions. Inhibited by 1,10-phenanthroline. Functionally, catalyzes the oxidation of methanol to yield formaldehyde. It possesses a NADH-dependent formaldehyde reductase activity and cannot use NADP. The chain is NAD-dependent methanol dehydrogenase from Bacillus methanolicus.